Reading from the N-terminus, the 1073-residue chain is Carbamoyl phosphate synthase large chain (1073 aa).

A carboxyphosphate synthetic domain region spans residues 1–399 (MPKREDIKKV…SLLKAFKSLD (399 aa)). The ATP site is built by Arg-129, Arg-169, Gly-175, Gly-176, Glu-208, Val-210, Glu-215, Gly-241, Val-242, His-243, Gln-284, and Glu-296. The ATP-grasp 1 domain occupies 133–325 (KETMLSIGEK…IARVTAKIAI (193 aa)). Mg(2+)-binding residues include Gln-284, Glu-296, and Asn-298. The Mn(2+) site is built by Gln-284, Glu-296, and Asn-298. Residues 400–540 (IDNQLGIKRW…YSTYEDTCET (141 aa)) are oligomerization domain. The tract at residues 541 to 931 (NSTDKKKILI…YKAELAADNL (391 aa)) is carbamoyl phosphate synthetic domain. The ATP-grasp 2 domain occupies 672 to 863 (YLLMQELGIP…LAKIAAKVIA (192 aa)). Residues Arg-708, Asp-747, Leu-749, Glu-754, Gly-779, Val-780, His-781, Ser-782, Gln-822, and Glu-834 each coordinate ATP. The Mg(2+) site is built by Gln-822, Glu-834, and Asn-836. Residues Gln-822, Glu-834, and Asn-836 each contribute to the Mn(2+) site. The 142-residue stretch at 930–1071 (NLLPLTGKVF…NEYHKEMEQK (142 aa)) folds into the MGS-like domain. Positions 932-1073 (LPLTGKVFLS…YHKEMEQKEE (142 aa)) are allosteric domain.

It belongs to the CarB family. In terms of assembly, composed of two chains; the small (or glutamine) chain promotes the hydrolysis of glutamine to ammonia, which is used by the large (or ammonia) chain to synthesize carbamoyl phosphate. Tetramer of heterodimers (alpha,beta)4. Mg(2+) is required as a cofactor. It depends on Mn(2+) as a cofactor.

The enzyme catalyses hydrogencarbonate + L-glutamine + 2 ATP + H2O = carbamoyl phosphate + L-glutamate + 2 ADP + phosphate + 2 H(+). It carries out the reaction hydrogencarbonate + NH4(+) + 2 ATP = carbamoyl phosphate + 2 ADP + phosphate + 2 H(+). Its pathway is amino-acid biosynthesis; L-arginine biosynthesis; carbamoyl phosphate from bicarbonate: step 1/1. It participates in pyrimidine metabolism; UMP biosynthesis via de novo pathway; (S)-dihydroorotate from bicarbonate: step 1/3. In terms of biological role, large subunit of the glutamine-dependent carbamoyl phosphate synthetase (CPSase). CPSase catalyzes the formation of carbamoyl phosphate from the ammonia moiety of glutamine, carbonate, and phosphate donated by ATP, constituting the first step of 2 biosynthetic pathways, one leading to arginine and/or urea and the other to pyrimidine nucleotides. The large subunit (synthetase) binds the substrates ammonia (free or transferred from glutamine from the small subunit), hydrogencarbonate and ATP and carries out an ATP-coupled ligase reaction, activating hydrogencarbonate by forming carboxy phosphate which reacts with ammonia to form carbamoyl phosphate. This chain is Carbamoyl phosphate synthase large chain, found in Methanosarcina mazei (strain ATCC BAA-159 / DSM 3647 / Goe1 / Go1 / JCM 11833 / OCM 88) (Methanosarcina frisia).